A 413-amino-acid polypeptide reads, in one-letter code: Probable Xaa-Pro aminopeptidase UREG_07123 (413 aa).

Mn(2+) is bound by residues Asp-194, Asp-205, Glu-340, and Glu-379.

This sequence belongs to the peptidase M24B family. Mn(2+) serves as cofactor.

It carries out the reaction Release of any N-terminal amino acid, including proline, that is linked to proline, even from a dipeptide or tripeptide.. Its function is as follows. Catalyzes the removal of a penultimate prolyl residue from the N-termini of peptides. This is Probable Xaa-Pro aminopeptidase UREG_07123 from Uncinocarpus reesii (strain UAMH 1704).